A 94-amino-acid chain; its full sequence is PqqA binding protein (94 aa).

It belongs to the PqqD family. In terms of assembly, monomer. Interacts with PqqE.

Its pathway is cofactor biosynthesis; pyrroloquinoline quinone biosynthesis. Its function is as follows. Functions as a PqqA binding protein and presents PqqA to PqqE, in the pyrroloquinoline quinone (PQQ) biosynthetic pathway. This chain is PqqA binding protein, found in Acinetobacter baumannii (strain SDF).